A 281-amino-acid polypeptide reads, in one-letter code: MLLEFTKMHGLGNDFVVLDLISQRAYLDTTTIQRMADRHFGIGFDQLLIVEPPDYPNVDFKYRIFNADGSEVEQCGNGVRCFARFVHERQLTKKTKIKVQTKAGIVEPELGPNGWVRVNMGYPKFMPHEIPFVTEEFEALYTLELANEQSLKIDVVNMGNPHAVTIVPDVLTADVATMGPQVESHVRFPQRVNAGFMQIVDEKHIRLRVFERGVGETLACGTGACAAAVSGMRRGLLANEVEVELAGGKLQIAWQEGDVVWMTGPTANVYEGRLDLRYFQS.

The substrate site is built by Asn13, Gln46, and Asn66. Catalysis depends on Cys75, which acts as the Proton donor. Substrate is bound by residues 76–77, Asn160, Asn193, and 211–212; these read GN and ER. Cys220 (proton acceptor) is an active-site residue. Substrate is bound at residue 221–222; sequence GT.

Belongs to the diaminopimelate epimerase family. As to quaternary structure, homodimer.

It localises to the cytoplasm. It catalyses the reaction (2S,6S)-2,6-diaminopimelate = meso-2,6-diaminopimelate. Its pathway is amino-acid biosynthesis; L-lysine biosynthesis via DAP pathway; DL-2,6-diaminopimelate from LL-2,6-diaminopimelate: step 1/1. Its function is as follows. Catalyzes the stereoinversion of LL-2,6-diaminopimelate (L,L-DAP) to meso-diaminopimelate (meso-DAP), a precursor of L-lysine and an essential component of the bacterial peptidoglycan. This chain is Diaminopimelate epimerase, found in Acinetobacter baylyi (strain ATCC 33305 / BD413 / ADP1).